We begin with the raw amino-acid sequence, 307 residues long: 1-aminocyclopropane-1-carboxylate oxidase 5 (307 aa).

The stretch at 106-134 (SNIKETMGEYREEVRKLASKMMEVMDENL) forms a coiled coil. The Fe2OG dioxygenase domain maps to 152–256 (GEETAFFGTK…RRSIASFYNP (105 aa)). Fe cation contacts are provided by H180, D182, and H237. R247 contacts 2-oxoglutarate.

The protein belongs to the iron/ascorbate-dependent oxidoreductase family. Fe(2+) serves as cofactor.

It carries out the reaction 1-aminocyclopropane-1-carboxylate + L-ascorbate + O2 = ethene + L-dehydroascorbate + hydrogen cyanide + CO2 + 2 H2O. It participates in alkene biosynthesis; ethylene biosynthesis via S-adenosyl-L-methionine; ethylene from S-adenosyl-L-methionine: step 2/2. In terms of biological role, enzyme involved in the ethylene biosynthesis. The protein is 1-aminocyclopropane-1-carboxylate oxidase 5 of Arabidopsis thaliana (Mouse-ear cress).